A 420-amino-acid polypeptide reads, in one-letter code: Mitochondrial chaperone BCS1 (420 aa).

The Mitochondrial intermembrane portion of the chain corresponds to 1–15 (MTLSDFIGALKDNPY). A helical membrane pass occupies residues 16–32 (FGAGFGLVGVGTALAVA). The Mitochondrial matrix segment spans residues 33–420 (RKGAQVGMIF…AIKNIAEIKD (388 aa)). Residue 230–237 (GPPGCGKS) participates in ATP binding.

The protein belongs to the AAA ATPase family. BCS1 subfamily.

It localises to the mitochondrion inner membrane. It carries out the reaction ATP + H2O = ADP + phosphate + H(+). Functionally, chaperone necessary for the incorporation of Rieske iron-sulfur protein uqcrfs1 into the mitochondrial respiratory chain complex III. This Danio rerio (Zebrafish) protein is Mitochondrial chaperone BCS1 (bcs1l).